Here is a 257-residue protein sequence, read N- to C-terminus: MQIHRLPAFSDNYIFVLHDPGQNIAAVVDPADPQPVLKKLAELGAELVAIFNTHHHSDHVGGNRTLLQAFPNTVVYGGEQDRGRIPGQQHFLKEGDQVSFAHRRAEVYFVPGHTRAHIAYYFPPTTGEEWGELFCGDTLFAGGCGRLFEGTPAQMVDSLSKLRNLPETTRVWCAHEYTLKNLQFALTVDSDNSHLKNRFKQVQNARNLSQPTVPSDIGLEKQTNPFLRWDQPHLIIHTKSNTPVQCFARLRGMKDQF.

The Zn(2+) site is built by His-54, His-56, Asp-58, His-59, His-113, Asp-137, and His-175.

It belongs to the metallo-beta-lactamase superfamily. Glyoxalase II family. Monomer. It depends on Zn(2+) as a cofactor.

The enzyme catalyses an S-(2-hydroxyacyl)glutathione + H2O = a 2-hydroxy carboxylate + glutathione + H(+). The protein operates within secondary metabolite metabolism; methylglyoxal degradation; (R)-lactate from methylglyoxal: step 2/2. Functionally, thiolesterase that catalyzes the hydrolysis of S-D-lactoyl-glutathione to form glutathione and D-lactic acid. The protein is Hydroxyacylglutathione hydrolase of Acaryochloris marina (strain MBIC 11017).